The primary structure comprises 474 residues: Protein nucleotidyltransferase YdiU (474 aa).

ATP-binding residues include glycine 89, glycine 91, arginine 92, lysine 112, aspartate 124, glycine 125, arginine 175, and arginine 182. Residue aspartate 256 is the Proton acceptor of the active site. Mg(2+) contacts are provided by asparagine 257 and aspartate 266. Aspartate 266 lines the ATP pocket.

Belongs to the SELO family. Mg(2+) serves as cofactor. It depends on Mn(2+) as a cofactor.

It catalyses the reaction L-seryl-[protein] + ATP = 3-O-(5'-adenylyl)-L-seryl-[protein] + diphosphate. The catalysed reaction is L-threonyl-[protein] + ATP = 3-O-(5'-adenylyl)-L-threonyl-[protein] + diphosphate. It carries out the reaction L-tyrosyl-[protein] + ATP = O-(5'-adenylyl)-L-tyrosyl-[protein] + diphosphate. The enzyme catalyses L-histidyl-[protein] + UTP = N(tele)-(5'-uridylyl)-L-histidyl-[protein] + diphosphate. It catalyses the reaction L-seryl-[protein] + UTP = O-(5'-uridylyl)-L-seryl-[protein] + diphosphate. The catalysed reaction is L-tyrosyl-[protein] + UTP = O-(5'-uridylyl)-L-tyrosyl-[protein] + diphosphate. Nucleotidyltransferase involved in the post-translational modification of proteins. It can catalyze the addition of adenosine monophosphate (AMP) or uridine monophosphate (UMP) to a protein, resulting in modifications known as AMPylation and UMPylation. This is Protein nucleotidyltransferase YdiU from Corynebacterium glutamicum (strain R).